A 607-amino-acid chain; its full sequence is CUB and zona pellucida-like domain-containing protein 1 (607 aa).

The signal sequence occupies residues 1–19 (MEVTGRLFIWAILAVSCRA). The Lumenal portion of the chain corresponds to 20–568 (QLNSTAAEGR…AEISKQPLSH (549 aa)). A glycan (N-linked (GlcNAc...) asparagine) is linked at asparagine 22. Cysteine 32 and cysteine 58 are joined by a disulfide. CUB domains follow at residues 32 to 146 (CTAS…YFFS) and 154 to 265 (CGGY…YAST). N-linked (GlcNAc...) asparagine glycosylation occurs at asparagine 67. 2 cysteine pairs are disulfide-bonded: cysteine 85–cysteine 107 and cysteine 154–cysteine 180. N-linked (GlcNAc...) asparagine glycosylation occurs at asparagine 195. A disulfide bond links cysteine 207 and cysteine 229. One can recognise a ZP domain in the interval 276 to 519 (SCASDKMRVI…SRCNQGCVSR (244 aa)). Asparagine 419 carries an N-linked (GlcNAc...) asparagine glycan. Residues cysteine 442 and cysteine 498 are joined by a disulfide bond. Residues 569–589 (LHLFSFMVLALNVVIVVTATV) form a helical membrane-spanning segment. The Cytoplasmic portion of the chain corresponds to 590-607 (RHFLNRWKDHGYQKLQVY).

Expressed predominantly in epithelium of uterus and oviduct.

The protein localises to the zymogen granule membrane. Functionally, localized to zymogen granules, where it functions in trypsinogen activation. May indirectly regulate cell motility, cell-cell and cell/extracellular matrix interactions. This is CUB and zona pellucida-like domain-containing protein 1 from Rattus norvegicus (Rat).